Consider the following 363-residue polypeptide: Mitogen-activated protein kinase 4 (363 aa).

Residues 30-318 form the Protein kinase domain; the sequence is YDLVKVVGFG…AKQVMEHPYF (289 aa). Residues 36 to 44 and Lys-59 each bind ATP; that span reads VGFGACGTV. Catalysis depends on Asp-156, which acts as the Proton acceptor. Phosphoserine is present on residues Ser-186 and Ser-187. A Phosphothreonine; by MKK5 modification is found at Thr-190. The TQY motif lies at 190–192; that stretch reads TQY. Phosphotyrosine; by MKK5 is present on Tyr-192.

It belongs to the protein kinase superfamily. CMGC Ser/Thr protein kinase family. MAP kinase subfamily. Mg(2+) serves as cofactor. Post-translationally, dually phosphorylated on Thr-190 and Tyr-192, which activates the enzyme.

It carries out the reaction L-seryl-[protein] + ATP = O-phospho-L-seryl-[protein] + ADP + H(+). It catalyses the reaction L-threonyl-[protein] + ATP = O-phospho-L-threonyl-[protein] + ADP + H(+). Its function is as follows. Essential for the two main proliferating life stages, the promastigotes and amastigotes, of the parasite. This chain is Mitogen-activated protein kinase 4, found in Leishmania mexicana.